Reading from the N-terminus, the 688-residue chain is Potassium-transporting ATPase ATP-binding subunit (688 aa).

The next 4 helical transmembrane spans lie at 37 to 57 (FIVY…LFGI), 65 to 85 (ILFI…AEAI), 219 to 239 (IALQ…TASL), and 262 to 282 (LALL…AIGI). Aspartate 313 acts as the 4-aspartylphosphate intermediate in catalysis. Residues aspartate 350, glutamate 354, 383-390 (FTAKTRMS), and lysine 401 each bind ATP. Mg(2+)-binding residues include aspartate 524 and aspartate 528. Transmembrane regions (helical) follow at residues 586–606 (IAND…GLFP), 622–642 (AILS…PLAL), and 668–688 (IIAP…LGIV).

It belongs to the cation transport ATPase (P-type) (TC 3.A.3) family. Type IA subfamily. In terms of assembly, the system is composed of three essential subunits: KdpA, KdpB and KdpC.

It is found in the cell membrane. It catalyses the reaction K(+)(out) + ATP + H2O = K(+)(in) + ADP + phosphate + H(+). Its function is as follows. Part of the high-affinity ATP-driven potassium transport (or Kdp) system, which catalyzes the hydrolysis of ATP coupled with the electrogenic transport of potassium into the cytoplasm. This subunit is responsible for energy coupling to the transport system and for the release of the potassium ions to the cytoplasm. The sequence is that of Potassium-transporting ATPase ATP-binding subunit from Clostridium perfringens (strain ATCC 13124 / DSM 756 / JCM 1290 / NCIMB 6125 / NCTC 8237 / Type A).